The following is a 105-amino-acid chain: Flagellar transcriptional regulator FlhD (105 aa).

It belongs to the FlhD family. As to quaternary structure, homodimer; disulfide-linked. Forms a heterohexamer composed of two FlhC and four FlhD subunits. Each FlhC binds a FlhD dimer, forming a heterotrimer, and a hexamer assembles by dimerization of two heterotrimers.

The protein resides in the cytoplasm. Its function is as follows. Functions in complex with FlhC as a master transcriptional regulator that regulates transcription of several flagellar and non-flagellar operons by binding to their promoter region. Activates expression of class 2 flagellar genes, including fliA, which is a flagellum-specific sigma factor that turns on the class 3 genes. Also regulates genes whose products function in a variety of physiological pathways. The protein is Flagellar transcriptional regulator FlhD of Nitrosomonas europaea (strain ATCC 19718 / CIP 103999 / KCTC 2705 / NBRC 14298).